A 256-amino-acid chain; its full sequence is Triosephosphate isomerase (256 aa).

Substrate is bound at residue N12–K14. Catalysis depends on H99, which acts as the Electrophile. The Proton acceptor role is filled by E169. Substrate is bound by residues G175, S214, and G235–G236.

This sequence belongs to the triosephosphate isomerase family. In terms of assembly, homodimer.

It is found in the cytoplasm. It carries out the reaction D-glyceraldehyde 3-phosphate = dihydroxyacetone phosphate. The protein operates within carbohydrate biosynthesis; gluconeogenesis. It participates in carbohydrate degradation; glycolysis; D-glyceraldehyde 3-phosphate from glycerone phosphate: step 1/1. Functionally, involved in the gluconeogenesis. Catalyzes stereospecifically the conversion of dihydroxyacetone phosphate (DHAP) to D-glyceraldehyde-3-phosphate (G3P). In Rhizobium etli (strain ATCC 51251 / DSM 11541 / JCM 21823 / NBRC 15573 / CFN 42), this protein is Triosephosphate isomerase.